We begin with the raw amino-acid sequence, 527 residues long: MQKRNRRDVVPHPSIETGPMIKHALSVTRQADFAAWYQDVIAEADLAEESGVRGCMVIKPWGYGIWERIQTVMDAAIKDAGVQNAYFPLFIPLSFFEKEADHVDGFAKEMAVVTHHRLIADSKGKLVPDPEAKLEEPLIVRPTSETVIGAAMSRWVQSWRDLPLKVNQWANVVRWEMRTRMFLRTSEFLWQEGHTAHADRDDAMAETLRALEMYRSFAEDVLAMPVIAGEKPENERFPGAVATYSIEAMMQDGKALQAGTSHYLGTGFAEAAGIRYQDRDGGHSLCHTTSWGTSTRMIGGVIMTHGDDDGLRCPPRIAPHQIVIVPMLRDNGEDAAILDYCRDLESRLKALDAFGEPVRVLLDTGANKAQTKRWGWVKKGAPIIVEVGPRDVAGGNVAVIRRDRLYQESGKLNSAFVAKGDFIADAAATLEDIQASLYAEARERLDANIRRDVTDLAAHFSGEDRFVGWAEVQWARPTGGALDRIVEQLKALKLTMRNTPLDAAPADSACIFTGEPAVERVLIGRTY.

This sequence belongs to the class-II aminoacyl-tRNA synthetase family. ProS type 3 subfamily. In terms of assembly, homodimer.

It localises to the cytoplasm. The catalysed reaction is tRNA(Pro) + L-proline + ATP = L-prolyl-tRNA(Pro) + AMP + diphosphate. Its function is as follows. Catalyzes the attachment of proline to tRNA(Pro) in a two-step reaction: proline is first activated by ATP to form Pro-AMP and then transferred to the acceptor end of tRNA(Pro). The chain is Proline--tRNA ligase from Sphingopyxis alaskensis (strain DSM 13593 / LMG 18877 / RB2256) (Sphingomonas alaskensis).